A 331-amino-acid chain; its full sequence is XylDLEGF operon transcriptional activator 1 (331 aa).

One can recognise an HTH araC/xylS-type domain in the interval 214–315 (ERVVQFIEEN…GELPSDTLRR (102 aa)). 2 DNA-binding regions (H-T-H motif) span residues 231–252 (ERLAELALMSPRSLYTLFEKHA) and 282–305 (VTEMALDYGFFHTGRFAENYRSTF).

It localises to the cytoplasm. Regulatory protein of the TOL plasmid xyl operons. XylS activates the xylXYZLTEGFJQKIH operon required for the degradation of toluene, m-xylene and p-xylene. The chain is XylDLEGF operon transcriptional activator 1 (xylS1) from Pseudomonas putida (Arthrobacter siderocapsulatus).